We begin with the raw amino-acid sequence, 349 residues long: Probable dual-specificity RNA methyltransferase RlmN (349 aa).

E94 (proton acceptor) is an active-site residue. Residues 100–334 (TETRTTACVS…VKVRRSRGKD (235 aa)) form the Radical SAM core domain. C107 and C339 are joined by a disulfide. Residues C114, C118, and C121 each coordinate [4Fe-4S] cluster. Residues 165 to 166 (GE), S197, 220 to 222 (SLH), and N296 contribute to the S-adenosyl-L-methionine site. C339 serves as the catalytic S-methylcysteine intermediate.

The protein belongs to the radical SAM superfamily. RlmN family. [4Fe-4S] cluster serves as cofactor.

Its subcellular location is the cytoplasm. The enzyme catalyses adenosine(2503) in 23S rRNA + 2 reduced [2Fe-2S]-[ferredoxin] + 2 S-adenosyl-L-methionine = 2-methyladenosine(2503) in 23S rRNA + 5'-deoxyadenosine + L-methionine + 2 oxidized [2Fe-2S]-[ferredoxin] + S-adenosyl-L-homocysteine. It carries out the reaction adenosine(37) in tRNA + 2 reduced [2Fe-2S]-[ferredoxin] + 2 S-adenosyl-L-methionine = 2-methyladenosine(37) in tRNA + 5'-deoxyadenosine + L-methionine + 2 oxidized [2Fe-2S]-[ferredoxin] + S-adenosyl-L-homocysteine. Functionally, specifically methylates position 2 of adenine 2503 in 23S rRNA and position 2 of adenine 37 in tRNAs. The chain is Probable dual-specificity RNA methyltransferase RlmN from Flavobacterium johnsoniae (strain ATCC 17061 / DSM 2064 / JCM 8514 / BCRC 14874 / CCUG 350202 / NBRC 14942 / NCIMB 11054 / UW101) (Cytophaga johnsonae).